A 199-amino-acid polypeptide reads, in one-letter code: Chaperone protein TorD (199 aa).

This sequence belongs to the TorD/DmsD family. TorD subfamily.

It is found in the cytoplasm. Involved in the biogenesis of TorA. Acts on TorA before the insertion of the molybdenum cofactor and, as a result, probably favors a conformation of the apoenzyme that is competent for acquiring the cofactor. This is Chaperone protein TorD from Shigella boydii serotype 18 (strain CDC 3083-94 / BS512).